A 174-amino-acid chain; its full sequence is Isomerase prhC (174 aa).

Belongs to the trt14 isomerase family. Homodimer.

It functions in the pathway secondary metabolite biosynthesis; terpenoid biosynthesis. In terms of biological role, isomerase; part of the gene cluster that mediates the biosynthesis of paraherquonin, a meroterpenoid with a unique, highly congested hexacyclic molecular architecture. The first step of the pathway is the synthesis of 3,5-dimethylorsellinic acid (DMOA) by the polyketide synthase prhL. Synthesis of DMOA is followed by farnesylation by the prenyltransferase prhE, methylesterification by the methyl-transferase prhM, epoxidation of the prenyl chain by the flavin-dependent monooxygenase prhF, and cyclization of the farnesyl moiety by the terpene cyclase prhH, to yield the tetracyclic intermediate, protoaustinoid A. The short chain dehydrogenase prhI then oxidizes the C-3 alcohol group of the terpene cyclase product to transform protoaustinoid A into protoaustinoid B. The FAD-binding monooxygenase prhJ catalyzes the oxidation of protoaustinoid B into preaustinoid A which is further oxidized into preaustinoid A1 by FAD-binding monooxygenase phrK. Finally, prhA leads to berkeleydione via the berkeleyone B intermediate. PrhA is a multifunctional dioxygenase that first desaturates at C5-C6 to form berkeleyone B, followed by rearrangement of the A/B-ring to form the cycloheptadiene moiety in berkeleydione. Berkeleydione serves as the key intermediate for the biosynthesis of paraherquonin as well as many other meroterpenoids. The cytochrome P450 monooxygenases prhB, prhD, and prhN, as well as the isomerase prhC, are probably involved in the late stage of paraherquonin biosynthesis, after the production of berkeleydione. Especially prhC might be a multifunctional enzyme that catalyzes the D-ring expansion via intramolecular methoxy rearrangement, as well as the hydrolysis of the expanded D-ring. The polypeptide is Isomerase prhC (Penicillium brasilianum).